A 528-amino-acid polypeptide reads, in one-letter code: Na(+)/H(+) antiporter NhaB (528 aa).

11 consecutive transmembrane segments (helical) span residues 10–30 (IGNF…SFLI), 63–83 (YPLQ…MTSA), 96–116 (VLLL…LLLF), 131–165 (VSLM…FYAI), 204–224 (LLMH…VGEP), 240–260 (FVVR…LTCL), 305–325 (VLVG…VGLV), 359–379 (LAVF…APVI), 391–411 (LVIF…VFVG), 449–469 (ATPN…APLI), and 476–496 (MVWM…LAIE).

This sequence belongs to the NhaB Na(+)/H(+) (TC 2.A.34) antiporter family.

The protein localises to the cell inner membrane. It carries out the reaction 2 Na(+)(in) + 3 H(+)(out) = 2 Na(+)(out) + 3 H(+)(in). Na(+)/H(+) antiporter that extrudes sodium in exchange for external protons. The protein is Na(+)/H(+) antiporter NhaB of Shewanella sp. (strain W3-18-1).